The following is a 171-amino-acid chain: UPF0312 protein SAR2769 (171 aa).

The protein belongs to the UPF0312 family.

In Staphylococcus aureus (strain MRSA252), this protein is UPF0312 protein SAR2769.